The chain runs to 184 residues: MNWRSERIWIELITGSRKTSNFCWACILFLGSLGFLLVGTSSYLGKNLISLLPSQQILFFPQGIVMSFYGIAGLFISSYLWCTISWNVGSGYDRFDRKEGIVCIFRWGFPGINRRIFLRFLMRDIQSIRMEVKEGLYSRRVLYMEIRGQGAIPLTRTDDNLTPREIEQKAAELAYFLRVPIELK.

Transmembrane regions (helical) follow at residues 22–42 and 57–77; these read FCWA…GTSS and ILFF…LFIS.

It belongs to the Ycf4 family.

The protein resides in the plastid. It is found in the chloroplast thylakoid membrane. Functionally, seems to be required for the assembly of the photosystem I complex. This chain is Photosystem I assembly protein Ycf4, found in Chloranthus spicatus (Chulantree).